We begin with the raw amino-acid sequence, 293 residues long: Aminodeoxychorismate lyase (293 aa).

Lys146 bears the N6-(pyridoxal phosphate)lysine mark.

It belongs to the class-IV pyridoxal-phosphate-dependent aminotransferase family. As to quaternary structure, homodimer. Requires pyridoxal 5'-phosphate as cofactor.

It catalyses the reaction 4-amino-4-deoxychorismate = 4-aminobenzoate + pyruvate + H(+). It functions in the pathway cofactor biosynthesis; tetrahydrofolate biosynthesis; 4-aminobenzoate from chorismate: step 2/2. In terms of biological role, involved in the biosynthesis of p-aminobenzoate (PABA), a precursor of tetrahydrofolate. Converts 4-amino-4-deoxychorismate into 4-aminobenzoate (PABA) and pyruvate. In Bacillus subtilis (strain 168), this protein is Aminodeoxychorismate lyase.